The primary structure comprises 79 residues: Putative membrane protein insertion efficiency factor (79 aa).

The protein belongs to the UPF0161 family.

The protein resides in the cell inner membrane. Its function is as follows. Could be involved in insertion of integral membrane proteins into the membrane. The polypeptide is Putative membrane protein insertion efficiency factor (Prochlorococcus marinus (strain NATL1A)).